We begin with the raw amino-acid sequence, 812 residues long: Valine--tRNA ligase (812 aa).

Positions 46–56 (PTVSGQLHIGH) match the 'HIGH' region motif. The short motif at 536-540 (KMSKS) is the 'KMSKS' region element. K539 is an ATP binding site.

This sequence belongs to the class-I aminoacyl-tRNA synthetase family. ValS type 2 subfamily. As to quaternary structure, monomer.

Its subcellular location is the cytoplasm. The catalysed reaction is tRNA(Val) + L-valine + ATP = L-valyl-tRNA(Val) + AMP + diphosphate. Its function is as follows. Catalyzes the attachment of valine to tRNA(Val). As ValRS can inadvertently accommodate and process structurally similar amino acids such as threonine, to avoid such errors, it has a 'posttransfer' editing activity that hydrolyzes mischarged Thr-tRNA(Val) in a tRNA-dependent manner. The chain is Valine--tRNA ligase from Rickettsia rickettsii (strain Iowa).